We begin with the raw amino-acid sequence, 430 residues long: Adenylosuccinate synthetase (430 aa).

Residues 13–19 (GDEGKGK) and 41–43 (GHT) each bind GTP. D14 functions as the Proton acceptor in the catalytic mechanism. The Mg(2+) site is built by D14 and G41. Residues 14-17 (DEGK), 39-42 (NAGH), T130, R144, Q225, T240, and R304 contribute to the IMP site. Catalysis depends on H42, which acts as the Proton donor. 300-306 (STTGRKR) is a binding site for substrate. Residues R306, 332-334 (KLD), and 414-416 (STG) each bind GTP.

This sequence belongs to the adenylosuccinate synthetase family. Homodimer. Requires Mg(2+) as cofactor.

It localises to the cytoplasm. It carries out the reaction IMP + L-aspartate + GTP = N(6)-(1,2-dicarboxyethyl)-AMP + GDP + phosphate + 2 H(+). Its pathway is purine metabolism; AMP biosynthesis via de novo pathway; AMP from IMP: step 1/2. In terms of biological role, plays an important role in the de novo pathway of purine nucleotide biosynthesis. Catalyzes the first committed step in the biosynthesis of AMP from IMP. The protein is Adenylosuccinate synthetase of Buchnera aphidicola subsp. Schizaphis graminum (strain Sg).